A 117-amino-acid polypeptide reads, in one-letter code: Large ribosomal subunit protein bL20 (117 aa).

This sequence belongs to the bacterial ribosomal protein bL20 family.

Its function is as follows. Binds directly to 23S ribosomal RNA and is necessary for the in vitro assembly process of the 50S ribosomal subunit. It is not involved in the protein synthesizing functions of that subunit. In Rippkaea orientalis (strain PCC 8801 / RF-1) (Cyanothece sp. (strain PCC 8801)), this protein is Large ribosomal subunit protein bL20.